A 109-amino-acid polypeptide reads, in one-letter code: uncharacterized protein (109 aa).

The protein to A.calcoaceticus putative ferredoxin.

This is an uncharacterized protein from Escherichia coli O157:H7.